Reading from the N-terminus, the 118-residue chain is uncharacterized protein (118 aa).

This is an uncharacterized protein from Escherichia coli O157:H7.